The chain runs to 202 residues: Orotate phosphoribosyltransferase (202 aa).

Position 113-121 (113-121 (EDIITTGGS)) interacts with 5-phospho-alpha-D-ribose 1-diphosphate. The orotate site is built by Thr117 and Arg145.

This sequence belongs to the purine/pyrimidine phosphoribosyltransferase family. PyrE subfamily. As to quaternary structure, homodimer. Mg(2+) is required as a cofactor.

It carries out the reaction orotidine 5'-phosphate + diphosphate = orotate + 5-phospho-alpha-D-ribose 1-diphosphate. It participates in pyrimidine metabolism; UMP biosynthesis via de novo pathway; UMP from orotate: step 1/2. Functionally, catalyzes the transfer of a ribosyl phosphate group from 5-phosphoribose 1-diphosphate to orotate, leading to the formation of orotidine monophosphate (OMP). This is Orotate phosphoribosyltransferase from Campylobacter lari (strain RM2100 / D67 / ATCC BAA-1060).